Here is a 283-residue protein sequence, read N- to C-terminus: uncharacterized protein (283 aa).

Helical transmembrane passes span 28–48, 65–85, 113–133, 135–155, 200–220, and 246–266; these read LSSTSGAIGAIFGIILSILLI, LTSLIVASFGFLIALIIGFIL, LKRGFLYWIGNIILSIIFMIV, ILFIIFGVFLIFLPLVGIVFI, LNYIILLIIVGVIVIVINFVV, and IVDVISAVISAFVGFYTAVFA.

It to M.jannaschii MJ0233.

Its subcellular location is the cell membrane. This is an uncharacterized protein from Methanocaldococcus jannaschii (strain ATCC 43067 / DSM 2661 / JAL-1 / JCM 10045 / NBRC 100440) (Methanococcus jannaschii).